The following is a 418-amino-acid chain: Serine/threonine-protein kinase PCRK1 (418 aa).

The segment at 36-63 (GSEFNSRDVSGTSTESSMGRKNSYPPVS) is disordered. A Protein kinase domain is found at 84–369 (FSRSVMIGEG…EVLEMVNKIV (286 aa)). ATP is bound by residues 90-98 (IGEGGFGCV) and Lys-118. Asp-218 serves as the catalytic Proton acceptor. Residues Ser-373, Ser-377, and Ser-385 each carry the phosphoserine modification.

The protein belongs to the protein kinase superfamily. Ser/Thr protein kinase family. As to quaternary structure, interacts with FLS2.

It is found in the cell membrane. The enzyme catalyses L-seryl-[protein] + ATP = O-phospho-L-seryl-[protein] + ADP + H(+). It carries out the reaction L-threonyl-[protein] + ATP = O-phospho-L-threonyl-[protein] + ADP + H(+). Functionally, involved in the activation of early immune responses. Plays a role in pattern-triggered immunity (PTI) induced by pathogen-associated molecular patterns (PAMPs) and damage-associated molecular patterns (DAMPs). Contributes to PTI in response to the bacterial pathogen Pseudomonas syringae pv maculicola strain ES4326. Contributes to PTI in response to the bacterial pathogen Pseudomonas syringae pv tomato strain DC3000. Functions redundantly with PCRK2 in basal resistance against bacterial pathogens and in regulation of plant immunity. Functions together with PCRK2 downstream of the PAMP receptor FLS2. Contributes to the induction of SARD1 and CBP60G, which are transcriptional activator of ICS1, an enzyme involved in salicylate (SA) biosynthesis upon pathogen attack. This Arabidopsis thaliana (Mouse-ear cress) protein is Serine/threonine-protein kinase PCRK1.